Reading from the N-terminus, the 473-residue chain is ATP synthase subunit beta (473 aa).

ATP is bound at residue 158–165 (GGAGVGKT).

It belongs to the ATPase alpha/beta chains family. As to quaternary structure, F-type ATPases have 2 components, CF(1) - the catalytic core - and CF(0) - the membrane proton channel. CF(1) has five subunits: alpha(3), beta(3), gamma(1), delta(1), epsilon(1). CF(0) has three main subunits: a(1), b(2) and c(9-12). The alpha and beta chains form an alternating ring which encloses part of the gamma chain. CF(1) is attached to CF(0) by a central stalk formed by the gamma and epsilon chains, while a peripheral stalk is formed by the delta and b chains.

Its subcellular location is the cell membrane. The catalysed reaction is ATP + H2O + 4 H(+)(in) = ADP + phosphate + 5 H(+)(out). In terms of biological role, produces ATP from ADP in the presence of a proton gradient across the membrane. The catalytic sites are hosted primarily by the beta subunits. The chain is ATP synthase subunit beta from Bacillus licheniformis (strain ATCC 14580 / DSM 13 / JCM 2505 / CCUG 7422 / NBRC 12200 / NCIMB 9375 / NCTC 10341 / NRRL NRS-1264 / Gibson 46).